Here is a 636-residue protein sequence, read N- to C-terminus: Chaperone protein DnaK (636 aa).

Threonine 203 bears the Phosphothreonine; by autocatalysis mark. Positions 602–636 are disordered; sequence VYGKQQEGAPAQEEPSAEGKKADDEGTVEGEFREV. Residues 618–636 are compositionally biased toward basic and acidic residues; the sequence is AEGKKADDEGTVEGEFREV.

The protein belongs to the heat shock protein 70 family.

Acts as a chaperone. In Dehalococcoides mccartyi (strain CBDB1), this protein is Chaperone protein DnaK.